The chain runs to 283 residues: Pantothenate synthetase (283 aa).

31–38 (MGALHDGH) contributes to the ATP binding site. The Proton donor role is filled by H38. Q62 lines the (R)-pantoate pocket. Q62 serves as a coordination point for beta-alanine. Position 148-151 (148-151 (GKKD)) interacts with ATP. Position 154 (Q154) interacts with (R)-pantoate. ATP-binding positions include V177 and 185–188 (KSSR).

The protein belongs to the pantothenate synthetase family. As to quaternary structure, homodimer.

The protein resides in the cytoplasm. It catalyses the reaction (R)-pantoate + beta-alanine + ATP = (R)-pantothenate + AMP + diphosphate + H(+). The protein operates within cofactor biosynthesis; (R)-pantothenate biosynthesis; (R)-pantothenate from (R)-pantoate and beta-alanine: step 1/1. In terms of biological role, catalyzes the condensation of pantoate with beta-alanine in an ATP-dependent reaction via a pantoyl-adenylate intermediate. In Staphylococcus aureus (strain USA300), this protein is Pantothenate synthetase.